The primary structure comprises 234 residues: Thymidine kinase, cytosolic (234 aa).

Residue S13 is modified to Phosphoserine. ATP is bound by residues 26–33 (GPMFSGKS), 58–60 (DTR), and 97–100 (DEGQ). Residue E98 is the Proton acceptor of the active site. F128 serves as a coordination point for substrate. Residues C153 and C156 each contribute to the Zn(2+) site. Substrate-binding positions include 172–176 (VEVIG) and Y181. The Zn(2+) site is built by C185 and C188. Positions 203 to 205 (KEN) match the KEN box motif.

The protein belongs to the thymidine kinase family. Homotetramer. Tetramerization from dimerization is induced by ATP and increases catalytic efficiency due to a high affinity for thymidine. Tetramerization is inhibited by phosphorylation at Ser-13. Interacts (via the KEN box) with FZR1. Phosphorylated on Ser-13 in mitosis. Phosphorylation of Ser-13 by CDK1 during mitosis reduces homotetramerization and catalytic efficiency when DNA replication is complete and intracellular TK1 is still present at a high level. In terms of processing, polyubiquitinated. Postmitosis, ubiquitination leads to proteasomal degradation. The KEN box sequence located at the C-terminal region targets for degradation by the anaphase promoting complex (APC/C) activated and rate-limited by FZR1.

It localises to the cytoplasm. The enzyme catalyses thymidine + ATP = dTMP + ADP + H(+). Cell-cycle-regulated enzyme of importance in nucleotide metabolism. Catalyzes the first enzymatic step in the salvage pathway converting thymidine into thymidine monophosphate. Transcriptional regulation limits expression to the S phase of the cell cycle and transient expression coincides with the oscillation in the intracellular dTTP concentration. In Cricetulus griseus (Chinese hamster), this protein is Thymidine kinase, cytosolic (TK1).